A 522-amino-acid polypeptide reads, in one-letter code: ATP synthase subunit alpha (522 aa).

176–183 serves as a coordination point for ATP; the sequence is GDRQTGKT.

This sequence belongs to the ATPase alpha/beta chains family. As to quaternary structure, F-type ATPases have 2 components, CF(1) - the catalytic core - and CF(0) - the membrane proton channel. CF(1) has five subunits: alpha(3), beta(3), gamma(1), delta(1), epsilon(1). CF(0) has four main subunits: a(1), b(1), b'(1) and c(9-12).

Its subcellular location is the cell membrane. The catalysed reaction is ATP + H2O + 4 H(+)(in) = ADP + phosphate + 5 H(+)(out). Its function is as follows. Produces ATP from ADP in the presence of a proton gradient across the membrane. The alpha chain is a regulatory subunit. This is ATP synthase subunit alpha from Chloroflexus aurantiacus (strain ATCC 29366 / DSM 635 / J-10-fl).